The chain runs to 343 residues: Phosphate acyltransferase (343 aa).

Belongs to the PlsX family. Homodimer. Probably interacts with PlsY.

It is found in the cytoplasm. It carries out the reaction a fatty acyl-[ACP] + phosphate = an acyl phosphate + holo-[ACP]. It functions in the pathway lipid metabolism; phospholipid metabolism. Functionally, catalyzes the reversible formation of acyl-phosphate (acyl-PO(4)) from acyl-[acyl-carrier-protein] (acyl-ACP). This enzyme utilizes acyl-ACP as fatty acyl donor, but not acyl-CoA. The chain is Phosphate acyltransferase from Haemophilus ducreyi (strain 35000HP / ATCC 700724).